The following is a 313-amino-acid chain: Pseudouridine-5'-phosphate glycosidase (313 aa).

E26 (proton donor) is an active-site residue. The substrate site is built by K87 and A107. D139 is a binding site for Mn(2+). Substrate is bound at residue 141–143; the sequence is SAD. K160 functions as the Nucleophile in the catalytic mechanism.

Belongs to the pseudouridine-5'-phosphate glycosidase family. Homotrimer. Mn(2+) serves as cofactor.

The catalysed reaction is D-ribose 5-phosphate + uracil = psi-UMP + H2O. Catalyzes the reversible cleavage of pseudouridine 5'-phosphate (PsiMP) to ribose 5-phosphate and uracil. Functions biologically in the cleavage direction, as part of a pseudouridine degradation pathway. In Corynebacterium aurimucosum (strain ATCC 700975 / DSM 44827 / CIP 107346 / CN-1) (Corynebacterium nigricans), this protein is Pseudouridine-5'-phosphate glycosidase.